Reading from the N-terminus, the 280-residue chain is ADNRRPIWVMGHMVNSLAQIDEFVGLGSNSIETDVSFDKQANPEYTYHGIPCDCGRACLHSTKFNDFLKGLRKVTTPGDSKYLEKLILVVFDLKTGSLYDNQAYDAGTKLAKNLLQHYWNNGNNGGRAYIILSIPNLNHYKLITGFKETLKNEGHEELLEKVGTDFSGNDDISDVQKTYNKAGVTGHVWQSDGITNCLLRGLTRVKAAVANRDSGSGIINKVYYWTVDKRQSTRDTLDANVDGIMTNYPDITVEILNEAAYKKKFRIATYEDNPWETFKG.

Residue His12 is part of the active site. Positions 32 and 34 each coordinate Mg(2+). His48 acts as the Nucleophile in catalysis. 2 disulfides stabilise this stretch: Cys52–Cys58 and Cys54–Cys197. Asp92 contributes to the Mg(2+) binding site.

This sequence belongs to the arthropod phospholipase D family. Class II subfamily. Requires Mg(2+) as cofactor. In terms of tissue distribution, expressed by the venom gland.

The protein resides in the secreted. It catalyses the reaction an N-(acyl)-sphingosylphosphocholine = an N-(acyl)-sphingosyl-1,3-cyclic phosphate + choline. The catalysed reaction is an N-(acyl)-sphingosylphosphoethanolamine = an N-(acyl)-sphingosyl-1,3-cyclic phosphate + ethanolamine. It carries out the reaction a 1-acyl-sn-glycero-3-phosphocholine = a 1-acyl-sn-glycero-2,3-cyclic phosphate + choline. The enzyme catalyses a 1-acyl-sn-glycero-3-phosphoethanolamine = a 1-acyl-sn-glycero-2,3-cyclic phosphate + ethanolamine. In terms of biological role, dermonecrotic toxins cleave the phosphodiester linkage between the phosphate and headgroup of certain phospholipids (sphingolipid and lysolipid substrates), forming an alcohol (often choline) and a cyclic phosphate. This toxin acts on sphingomyelin (SM) with high activity. It may also act on ceramide phosphoethanolamine (CPE), lysophosphatidylcholine (LPC) and lysophosphatidylethanolamine (LPE), but not on lysophosphatidylserine (LPS), and lysophosphatidylglycerol (LPG). It acts by transphosphatidylation, releasing exclusively cyclic phosphate products as second products. Induces platelet aggregation in platelet rich plasma, but not in washed platelet, indicating that this activity is dependent on plasma components. Also induces hemolysis. In vivo, the recombinant protein evokes an intense inflammatory reaction and dermonecrosis, similar to those induced by L.gaucho total venom. Is a good immunogen, capable of inducing immunoprotection in test animals. Its function is as follows. Anionic antimicrobial peptide that shows antimicrobial activity against Gram-negative bacteria (MIC=1.15-4.6 uM) (tested on E.coli, P.aeruginosa, and E.cloacae), but not on Gram-negative bacteria (M.luteus, S.aureus, and B.subtilis), neither on fungi and yeasts (A.niger, C.albicans and C.krusei). Does not show hemolytic effects against human erythrocytes, and has no cytotoxic effects against human cervical carcinoma cells (HeLa). The polypeptide is Dermonecrotic toxin LgSicTox-alphaIC1 (Loxosceles gaucho (Spider)).